The primary structure comprises 209 residues: Small ribosomal subunit protein uS4 (209 aa).

Residues Ser-98–Ala-164 form the S4 RNA-binding domain.

This sequence belongs to the universal ribosomal protein uS4 family. Part of the 30S ribosomal subunit. Contacts protein S5. The interaction surface between S4 and S5 is involved in control of translational fidelity.

Its function is as follows. One of the primary rRNA binding proteins, it binds directly to 16S rRNA where it nucleates assembly of the body of the 30S subunit. In terms of biological role, with S5 and S12 plays an important role in translational accuracy. This is Small ribosomal subunit protein uS4 from Frankia casuarinae (strain DSM 45818 / CECT 9043 / HFP020203 / CcI3).